The primary structure comprises 155 residues: Deoxyuridine 5'-triphosphate nucleotidohydrolase (155 aa).

Substrate is bound by residues 74 to 76 (RSG), Asn-87, and 91 to 93 (LID).

This sequence belongs to the dUTPase family. Requires Mg(2+) as cofactor.

The enzyme catalyses dUTP + H2O = dUMP + diphosphate + H(+). The protein operates within pyrimidine metabolism; dUMP biosynthesis; dUMP from dCTP (dUTP route): step 2/2. Functionally, this enzyme is involved in nucleotide metabolism: it produces dUMP, the immediate precursor of thymidine nucleotides and it decreases the intracellular concentration of dUTP so that uracil cannot be incorporated into DNA. This chain is Deoxyuridine 5'-triphosphate nucleotidohydrolase, found in Xanthomonas axonopodis pv. citri (strain 306).